The chain runs to 301 residues: Transcription elongation factor A protein 1 (301 aa).

M1 is subject to N-acetylmethionine. The TFIIS N-terminal domain occupies 3-80; it reads DEVVRIAKKM…KSWKKLLDGP (78 aa). K55 is covalently cross-linked (Glycyl lysine isopeptide (Lys-Gly) (interchain with G-Cter in ubiquitin)). Phosphoserine is present on residues S57, S81, S97, and S100. Positions 76–93 are enriched in basic and acidic residues; sequence LLDGPSTDKDPEEKKKEP. Residues 76 to 139 form a disordered region; the sequence is LLDGPSTDKD…FPRAPSTSDS (64 aa). Residues 140-256 form the TFIIS central domain; that stretch reads VRLKCREMLA…EHQMAKTGGT (117 aa). The TFIIS-type zinc-finger motif lies at 259–299; it reads DLFTCGKCKKKNCTYTQVQTRSADEPMTTFVVCNECGNRWK. 4 residues coordinate Zn(2+): C263, C266, C291, and C294.

The protein belongs to the TFS-II family. Interacts with EAF2. Associates with UBR5 and forms a transcription regulatory complex made of CDK9, Pol II, UBR5 and TCEA1/TFIIS. Part of TBP-based Pol II pre-initiation complex (PIC), in which Pol II core assembles with general transcription factors and other specific initiation factors including GTF2E1, GTF2E2, GTF2F1, GTF2F2, TCEA1, ERCC2, ERCC3, GTF2H2, GTF2H3, GTF2H4, GTF2H5, GTF2A1, GTF2A2, GTF2B and TBP; this large multi-subunit PIC complex mediates DNA unwinding and targets Pol II core to the transcription start site where the first phosphodiester bond forms.

It is found in the nucleus. Functionally, necessary for efficient RNA polymerase II transcription elongation past template-encoded arresting sites. The arresting sites in DNA have the property of trapping a certain fraction of elongating RNA polymerases that pass through, resulting in locked ternary complexes. Cleavage of the nascent transcript by S-II allows the resumption of elongation from the new 3'-terminus. This Mus musculus (Mouse) protein is Transcription elongation factor A protein 1 (Tcea1).